The following is a 105-amino-acid chain: Small ribosomal subunit protein uS10 (105 aa).

This sequence belongs to the universal ribosomal protein uS10 family. Part of the 30S ribosomal subunit.

Involved in the binding of tRNA to the ribosomes. The polypeptide is Small ribosomal subunit protein uS10 (Legionella pneumophila (strain Paris)).